The following is a 195-amino-acid chain: ATP-dependent Clp protease proteolytic subunit (195 aa).

The active-site Nucleophile is the Ser98. The active site involves His123.

It belongs to the peptidase S14 family. In terms of assembly, fourteen ClpP subunits assemble into 2 heptameric rings which stack back to back to give a disk-like structure with a central cavity, resembling the structure of eukaryotic proteasomes.

The protein resides in the cytoplasm. It carries out the reaction Hydrolysis of proteins to small peptides in the presence of ATP and magnesium. alpha-casein is the usual test substrate. In the absence of ATP, only oligopeptides shorter than five residues are hydrolyzed (such as succinyl-Leu-Tyr-|-NHMec, and Leu-Tyr-Leu-|-Tyr-Trp, in which cleavage of the -Tyr-|-Leu- and -Tyr-|-Trp bonds also occurs).. Its function is as follows. Cleaves peptides in various proteins in a process that requires ATP hydrolysis. Has a chymotrypsin-like activity. Plays a major role in the degradation of misfolded proteins. This Alkaliphilus oremlandii (strain OhILAs) (Clostridium oremlandii (strain OhILAs)) protein is ATP-dependent Clp protease proteolytic subunit.